The following is a 231-amino-acid chain: Protein crossbronx homolog (231 aa).

The 155-residue stretch at 14 to 168 (LQEYKILTEY…VEECVRLSQA (155 aa)) folds into the UBC core domain.

The protein belongs to the ubiquitin-conjugating enzyme family. FTS subfamily.

The sequence is that of Protein crossbronx homolog from Culex quinquefasciatus (Southern house mosquito).